Here is a 144-residue protein sequence, read N- to C-terminus: UPF0735 ACT domain-containing protein NT01CX_1681 (144 aa).

An ACT domain is found at threonine 68–methionine 143.

The protein belongs to the UPF0735 family.

This Clostridium novyi (strain NT) protein is UPF0735 ACT domain-containing protein NT01CX_1681.